The following is a 248-amino-acid chain: Ubiquinone biosynthesis O-methyltransferase (248 aa).

The S-adenosyl-L-methionine site is built by Arg41, Gly72, Asp93, and Met136.

It belongs to the methyltransferase superfamily. UbiG/COQ3 family.

It carries out the reaction a 3-demethylubiquinol + S-adenosyl-L-methionine = a ubiquinol + S-adenosyl-L-homocysteine + H(+). It catalyses the reaction a 3-(all-trans-polyprenyl)benzene-1,2-diol + S-adenosyl-L-methionine = a 2-methoxy-6-(all-trans-polyprenyl)phenol + S-adenosyl-L-homocysteine + H(+). It participates in cofactor biosynthesis; ubiquinone biosynthesis. In terms of biological role, O-methyltransferase that catalyzes the 2 O-methylation steps in the ubiquinone biosynthetic pathway. The polypeptide is Ubiquinone biosynthesis O-methyltransferase (Rhizobium rhizogenes (strain K84 / ATCC BAA-868) (Agrobacterium radiobacter)).